A 362-amino-acid chain; its full sequence is Sulfate/thiosulfate import ATP-binding protein CysA (362 aa).

Positions isoleucine 3–leucine 237 constitute an ABC transporter domain. Glycine 35–threonine 42 serves as a coordination point for ATP.

This sequence belongs to the ABC transporter superfamily. Sulfate/tungstate importer (TC 3.A.1.6) family. The complex is composed of two ATP-binding proteins (CysA), two transmembrane proteins (CysT and CysW) and a solute-binding protein (CysP).

The protein resides in the cell inner membrane. It catalyses the reaction sulfate(out) + ATP + H2O = sulfate(in) + ADP + phosphate + H(+). It carries out the reaction thiosulfate(out) + ATP + H2O = thiosulfate(in) + ADP + phosphate + H(+). Part of the ABC transporter complex CysAWTP involved in sulfate/thiosulfate import. Responsible for energy coupling to the transport system. The protein is Sulfate/thiosulfate import ATP-binding protein CysA of Photorhabdus laumondii subsp. laumondii (strain DSM 15139 / CIP 105565 / TT01) (Photorhabdus luminescens subsp. laumondii).